Consider the following 319-residue polypeptide: Formimidoylglutamase (319 aa).

Residues His-131, Asp-154, His-156, Asp-158, Cys-248, and Asp-250 each coordinate Mn(2+).

The protein belongs to the arginase family. Requires Mn(2+) as cofactor.

The enzyme catalyses N-formimidoyl-L-glutamate + H2O = formamide + L-glutamate. It participates in amino-acid degradation; L-histidine degradation into L-glutamate; L-glutamate from N-formimidoyl-L-glutamate (hydrolase route): step 1/1. Catalyzes the conversion of N-formimidoyl-L-glutamate to L-glutamate and formamide. In Legionella pneumophila subsp. pneumophila (strain Philadelphia 1 / ATCC 33152 / DSM 7513), this protein is Formimidoylglutamase.